Here is a 413-residue protein sequence, read N- to C-terminus: Interferon-inducible GTPase 1 (413 aa).

Glycine 2 is lipidated: N-myristoyl glycine. The region spanning 68–250 (SVLNVAVTGE…PVLMDKLISD (183 aa)) is the IRG-type G domain. Positions 79, 81, 82, 83, 84, 102, and 103 each coordinate GDP. Position 102 is a (Microbial infection) Phosphothreonine; by ROP18 (threonine 102). Threonine 108 bears the (Microbial infection) Phosphothreonine; by ROP18 mark. Positions 184, 186, 187, and 232 each coordinate GDP. A disulfide bridge connects residues cysteine 236 and cysteine 410.

This sequence belongs to the TRAFAC class dynamin-like GTPase superfamily. IRG family. In terms of assembly, monomer, as apoenzyme and in the GDP-bound form. Homooligomer, upon GTP binding. Interacts with HOOK3. As to quaternary structure, (Microbial infection) Interacts with Toxoplasma gondii GRA7 in GTP-dependent manner; the interaction results in faster turnover of the GTP-activated IIGP1 oligomer. Interacts with T.gondii ROP5; the interaction results in inhibition of IRGA6/IIGP1 GTPase activity and oligomerization. Myristoylated. Post-translationally, (Microbial infection) Phosphorylated by Toxoplasma gondii ROP18 from virulent strains.

The protein resides in the cytoplasm. It is found in the nucleus membrane. The protein localises to the endoplasmic reticulum membrane. Its subcellular location is the golgi apparatus. It localises to the golgi stack membrane. The protein resides in the parasitophorous vacuole membrane. The catalysed reaction is GTP + H2O = GDP + phosphate + H(+). Functionally, GTPase with low activity. Has higher affinity for GDP than for GTP. Plays a role in resistance to intracellular pathogens. During infection with avirulent Toxoplasma gondii strains, recruited to the parasitophorous vacuole membrane. Required for disruption of the parasitophorous vacuole formed following T.gondii infection and subsequent killing of the parasite. Mediates resistance to Chlamydia trachomatis infection by targeting bacterial inclusions to autophagosomes for subsequent lysosomal destruction. The protein is Interferon-inducible GTPase 1 (Iigp1) of Mus musculus (Mouse).